We begin with the raw amino-acid sequence, 146 residues long: UPF0260 protein Spea_2441 (146 aa).

This sequence belongs to the UPF0260 family.

This Shewanella pealeana (strain ATCC 700345 / ANG-SQ1) protein is UPF0260 protein Spea_2441.